The chain runs to 617 residues: tRNA uridine 5-carboxymethylaminomethyl modification enzyme MnmG (617 aa).

Residues 9 to 14, V121, and T176 each bind FAD; that span reads GAGHAG. 269–283 lines the NAD(+) pocket; it reads GPRYCPSIEDKFVRF. Position 366 (Q366) interacts with FAD.

Belongs to the MnmG family. As to quaternary structure, homodimer. Heterotetramer of two MnmE and two MnmG subunits. Requires FAD as cofactor.

It localises to the cytoplasm. Its function is as follows. NAD-binding protein involved in the addition of a carboxymethylaminomethyl (cmnm) group at the wobble position (U34) of certain tRNAs, forming tRNA-cmnm(5)s(2)U34. The sequence is that of tRNA uridine 5-carboxymethylaminomethyl modification enzyme MnmG from Acholeplasma laidlawii (strain PG-8A).